Consider the following 22-residue polypeptide: Sex pheromone inhibitor determinant (22 aa).

The propeptide occupies 1 to 14 (MSKRAMKKIIPLIT).

It localises to the secreted. Functionally, acts as a competitive inhibitor of the CAD1 pheromone. This chain is Sex pheromone inhibitor determinant (iad), found in Enterococcus faecalis (strain ATCC 700802 / V583).